The sequence spans 144 residues: Nucleoside diphosphate kinase (144 aa).

ATP is bound by residues Lys-11, Phe-59, Arg-87, Thr-93, Arg-104, and Asn-114. The Pros-phosphohistidine intermediate role is filled by His-117.

The protein belongs to the NDK family. Homotetramer. Mg(2+) is required as a cofactor.

The protein localises to the cytoplasm. It catalyses the reaction a 2'-deoxyribonucleoside 5'-diphosphate + ATP = a 2'-deoxyribonucleoside 5'-triphosphate + ADP. The catalysed reaction is a ribonucleoside 5'-diphosphate + ATP = a ribonucleoside 5'-triphosphate + ADP. Its function is as follows. Major role in the synthesis of nucleoside triphosphates other than ATP. The ATP gamma phosphate is transferred to the NDP beta phosphate via a ping-pong mechanism, using a phosphorylated active-site intermediate. The polypeptide is Nucleoside diphosphate kinase (Baumannia cicadellinicola subsp. Homalodisca coagulata).